A 193-amino-acid chain; its full sequence is 7-methyl-GTP pyrophosphatase (193 aa).

Asp-70 functions as the Proton acceptor in the catalytic mechanism.

This sequence belongs to the Maf family. YceF subfamily. A divalent metal cation serves as cofactor.

The protein resides in the cytoplasm. The catalysed reaction is N(7)-methyl-GTP + H2O = N(7)-methyl-GMP + diphosphate + H(+). In terms of biological role, nucleoside triphosphate pyrophosphatase that hydrolyzes 7-methyl-GTP (m(7)GTP). May have a dual role in cell division arrest and in preventing the incorporation of modified nucleotides into cellular nucleic acids. This is 7-methyl-GTP pyrophosphatase from Vibrio cholerae serotype O1 (strain ATCC 39315 / El Tor Inaba N16961).